The primary structure comprises 344 residues: Deoxyhypusine hydroxylase (344 aa).

2 HEAT-like PBS-type repeats span residues 81–107 and 115–140; these read LKHELAYCLGQTANGAAIPYLTAVLED and RHEAAEALGALGDVASLGVLKRFRDR. His-83, Glu-84, His-116, and Glu-117 together coordinate Fe cation. A disordered region spans residues 169–188; the sequence is EKLRASDFSSVDPAPPTAQG. HEAT-like PBS-type repeat units follow at residues 210–240, 248–274, and 281–308; these read KRYRAMFALRDLASPPDLPTAVPAVLALAKG, FRHEIAFVFGQLAHPASIPALTEALSN, and VRHEAAEALGSLGDEEGVEETLRKFLHD. His-250, Glu-251, His-283, and Glu-284 together coordinate Fe cation.

It belongs to the deoxyhypusine hydroxylase family. It depends on Fe(2+) as a cofactor.

The protein localises to the cytoplasm. It localises to the nucleus. The enzyme catalyses [eIF5A protein]-deoxyhypusine + AH2 + O2 = [eIF5A protein]-hypusine + A + H2O. The protein operates within protein modification; eIF5A hypusination. Its function is as follows. Catalyzes the hydroxylation of the N(6)-(4-aminobutyl)-L-lysine intermediate to form hypusine, an essential post-translational modification only found in mature eIF-5A factor. This chain is Deoxyhypusine hydroxylase, found in Chaetomium globosum (strain ATCC 6205 / CBS 148.51 / DSM 1962 / NBRC 6347 / NRRL 1970) (Soil fungus).